A 490-amino-acid polypeptide reads, in one-letter code: Aspartyl/glutamyl-tRNA(Asn/Gln) amidotransferase subunit B (490 aa).

The protein belongs to the GatB/GatE family. GatB subfamily. Heterotrimer of A, B and C subunits.

The enzyme catalyses L-glutamyl-tRNA(Gln) + L-glutamine + ATP + H2O = L-glutaminyl-tRNA(Gln) + L-glutamate + ADP + phosphate + H(+). The catalysed reaction is L-aspartyl-tRNA(Asn) + L-glutamine + ATP + H2O = L-asparaginyl-tRNA(Asn) + L-glutamate + ADP + phosphate + 2 H(+). In terms of biological role, allows the formation of correctly charged Asn-tRNA(Asn) or Gln-tRNA(Gln) through the transamidation of misacylated Asp-tRNA(Asn) or Glu-tRNA(Gln) in organisms which lack either or both of asparaginyl-tRNA or glutaminyl-tRNA synthetases. The reaction takes place in the presence of glutamine and ATP through an activated phospho-Asp-tRNA(Asn) or phospho-Glu-tRNA(Gln). The chain is Aspartyl/glutamyl-tRNA(Asn/Gln) amidotransferase subunit B from Methylobacterium nodulans (strain LMG 21967 / CNCM I-2342 / ORS 2060).